The chain runs to 192 residues: Thymidylate kinase (192 aa).

7–14 is a binding site for ATP; the sequence is GIDCVGKS.

The protein belongs to the thymidylate kinase family.

The catalysed reaction is dTMP + ATP = dTDP + ADP. Its function is as follows. Phosphorylation of dTMP to form dTDP in both de novo and salvage pathways of dTTP synthesis. The polypeptide is Thymidylate kinase (Campylobacter jejuni subsp. jejuni serotype O:6 (strain 81116 / NCTC 11828)).